The following is a 206-amino-acid chain: Eukaryotic translation initiation factor isoform 4E-2 (206 aa).

A disulfide bridge connects residues C103 and C142.

It belongs to the eukaryotic initiation factor 4E family. As to quaternary structure, EIF4F is a multi-subunit complex, the composition of which varies with external and internal environmental conditions. It is composed of at least EIF4A, EIF4E and EIF4G. EIF4E is also known to interact with other partners. In higher plants two isoforms of EIF4F have been identified, named isoform EIF4F and isoform EIF(iso)4F. Isoform EIF4F has subunits p220 and p26, whereas isoform EIF(iso)4F has subunits p82 and p28. Post-translationally, according to the redox status, the Cys-103-Cys-142 disulfide bridge may have a role in regulating protein function by affecting its ability to bind capped mRNA.

Its function is as follows. Recognizes and binds the 7-methylguanosine-containing mRNA cap during an early step in the initiation of protein synthesis and facilitates ribosome binding by inducing the unwinding of the mRNAs secondary structures. This Oryza sativa subsp. japonica (Rice) protein is Eukaryotic translation initiation factor isoform 4E-2.